The chain runs to 107 residues: MENAIRNAFTMKVKSGFETEYKIRHDQIWPELTALLSESGICDYSIFLDEETGILFGVQKLSSGFDRSQLSSHPLMRKWWNHMSDIMETNPDNSPKTNSLKEVFHLD.

Tyr-21 serves as a coordination point for substrate. Catalysis depends on His-25, which acts as the Proton donor. Substrate-binding positions include Tyr-44 and 79-80 (WW). Residues 88 to 107 (ETNPDNSPKTNSLKEVFHLD) are disordered. Positions 90–100 (NPDNSPKTNSL) are enriched in polar residues.

It belongs to the rhamnose mutarotase family. As to quaternary structure, homodimer.

It is found in the cytoplasm. The enzyme catalyses alpha-L-rhamnose = beta-L-rhamnose. It functions in the pathway carbohydrate metabolism; L-rhamnose metabolism. Involved in the anomeric conversion of L-rhamnose. This Flavobacterium johnsoniae (strain ATCC 17061 / DSM 2064 / JCM 8514 / BCRC 14874 / CCUG 350202 / NBRC 14942 / NCIMB 11054 / UW101) (Cytophaga johnsonae) protein is L-rhamnose mutarotase.